Consider the following 188-residue polypeptide: Apolipoprotein M (188 aa).

Positions 1 to 22 form a signal peptide, not cleaved; it reads MFHQIWAALLYFYGIILNSIYQ. Disulfide bonds link Cys23/Cys167, Cys95/Cys183, and Cys128/Cys157. A glycan (N-linked (GlcNAc...) asparagine) is linked at Asn135. Positions 136 and 143 each coordinate tetradecanoate.

The protein belongs to the calycin superfamily. Lipocalin family. Highly divergent. Interacts with LRP2; LRP2 mediates APOM renal uptake and subsequent lysosomal degradation. In terms of tissue distribution, plasma protein. Expressed in liver and kidney.

The protein localises to the secreted. Functionally, probably involved in lipid transport. Can bind sphingosine-1-phosphate, myristic acid, palmitic acid and stearic acid, retinol, all-trans-retinoic acid and 9-cis-retinoic acid. In Homo sapiens (Human), this protein is Apolipoprotein M (APOM).